Here is a 231-residue protein sequence, read N- to C-terminus: Ureidoacrylate amidohydrolase RutB (231 aa).

Asp-25 functions as the Proton acceptor in the catalytic mechanism. Residue Lys-134 is part of the active site. Cys-167 functions as the Nucleophile in the catalytic mechanism.

Belongs to the isochorismatase family. RutB subfamily.

The enzyme catalyses (Z)-3-ureidoacrylate + H2O + H(+) = (Z)-3-aminoacrylate + NH4(+) + CO2. The catalysed reaction is (Z)-3-ureidoacrylate + H2O = (Z)-3-aminoacrylate + carbamate + H(+). It catalyses the reaction (Z)-2-methylureidoacrylate + H2O + H(+) = (Z)-2-methylaminoacrylate + NH4(+) + CO2. Functionally, hydrolyzes ureidoacrylate to form aminoacrylate and carbamate. The carbamate hydrolyzes spontaneously, thereby releasing one of the nitrogen atoms of the pyrimidine ring as ammonia and one of its carbon atoms as CO2. This is Ureidoacrylate amidohydrolase RutB from Escherichia coli O9:H4 (strain HS).